We begin with the raw amino-acid sequence, 215 residues long: Oligoribonuclease (215 aa).

An Exonuclease domain is found at 5–170 (LVWIDCEMTG…ADIHESIREL (166 aa)). Y127 is an active-site residue.

The protein belongs to the oligoribonuclease family.

It localises to the cytoplasm. Its function is as follows. 3'-to-5' exoribonuclease specific for small oligoribonucleotides. This Mycobacterium ulcerans (strain Agy99) protein is Oligoribonuclease.